A 110-amino-acid chain; its full sequence is Insulin (110 aa).

Positions 1 to 23 (MALWLQAFTLLVLLVLSSPGAQS) are cleaved as a signal peptide. 3 cysteine pairs are disulfide-bonded: Cys30–Cys96, Cys42–Cys109, and Cys95–Cys100. The propeptide at 56-87 (DVDPLLGFLSPKSAQENEADEYPYKDQGDLKV) is c peptide.

It belongs to the insulin family. In terms of assembly, heterodimer of a B chain and an A chain linked by two disulfide bonds.

The protein localises to the secreted. Functionally, insulin decreases blood glucose concentration. It increases cell permeability to monosaccharides, amino acids and fatty acids. It accelerates glycolysis, the pentose phosphate cycle, and glycogen synthesis in liver. The protein is Insulin (ins) of Pantodon buchholzi (Freshwater butterflyfish).